The primary structure comprises 270 residues: Orotidine 5'-phosphate decarboxylase (270 aa).

Substrate contacts are provided by residues Asp-39, 61–63 (KTH), 93–102 (DRKFADIGNT), Tyr-221, and Arg-239. The Proton donor role is filled by Lys-95.

This sequence belongs to the OMP decarboxylase family.

It carries out the reaction orotidine 5'-phosphate + H(+) = UMP + CO2. The protein operates within pyrimidine metabolism; UMP biosynthesis via de novo pathway; UMP from orotate: step 2/2. In Candida albicans (strain SC5314 / ATCC MYA-2876) (Yeast), this protein is Orotidine 5'-phosphate decarboxylase (URA3).